Reading from the N-terminus, the 311-residue chain is Lipoyl synthase (311 aa).

Residues Cys-58, Cys-63, Cys-69, Cys-84, Cys-88, Cys-91, and Ser-298 each contribute to the [4Fe-4S] cluster site. The region spanning 70–287 (FGHGTATFMI…EQEALAMGFR (218 aa)) is the Radical SAM core domain.

The protein belongs to the radical SAM superfamily. Lipoyl synthase family. It depends on [4Fe-4S] cluster as a cofactor.

It localises to the cytoplasm. It catalyses the reaction [[Fe-S] cluster scaffold protein carrying a second [4Fe-4S](2+) cluster] + N(6)-octanoyl-L-lysyl-[protein] + 2 oxidized [2Fe-2S]-[ferredoxin] + 2 S-adenosyl-L-methionine + 4 H(+) = [[Fe-S] cluster scaffold protein] + N(6)-[(R)-dihydrolipoyl]-L-lysyl-[protein] + 4 Fe(3+) + 2 hydrogen sulfide + 2 5'-deoxyadenosine + 2 L-methionine + 2 reduced [2Fe-2S]-[ferredoxin]. Its pathway is protein modification; protein lipoylation via endogenous pathway; protein N(6)-(lipoyl)lysine from octanoyl-[acyl-carrier-protein]: step 2/2. Catalyzes the radical-mediated insertion of two sulfur atoms into the C-6 and C-8 positions of the octanoyl moiety bound to the lipoyl domains of lipoate-dependent enzymes, thereby converting the octanoylated domains into lipoylated derivatives. The sequence is that of Lipoyl synthase from Thiobacillus denitrificans (strain ATCC 25259 / T1).